Consider the following 109-residue polypeptide: METTAIIRGVHISAQKTRLVADLIRGKSVAQALNILTFSPKKAAVILKKAVESAIANAEHNDGADIDELKVTTIFVDKAQSMKRFSARAKGRGNRIEKQTCHITVKVGA.

This sequence belongs to the universal ribosomal protein uL22 family. Part of the 50S ribosomal subunit.

Its function is as follows. This protein binds specifically to 23S rRNA; its binding is stimulated by other ribosomal proteins, e.g. L4, L17, and L20. It is important during the early stages of 50S assembly. It makes multiple contacts with different domains of the 23S rRNA in the assembled 50S subunit and ribosome. Functionally, the globular domain of the protein is located near the polypeptide exit tunnel on the outside of the subunit, while an extended beta-hairpin is found that lines the wall of the exit tunnel in the center of the 70S ribosome. The polypeptide is Large ribosomal subunit protein uL22 (Bordetella avium (strain 197N)).